A 415-amino-acid chain; its full sequence is Maltose excess protein 1, chloroplastic (415 aa).

The tract at residues 74–93 is disordered; the sequence is SESDSDSDFPHENQQGNPGL. 9 consecutive transmembrane segments (helical) span residues 139–159, 176–196, 199–219, 231–251, 252–272, 286–306, 322–342, 345–365, and 373–393; these read ALSAVPWLGMLTGLLGNLSLL, LGVVSTHIVLAQLTMAEAMPI, FVATSAVVTIGLIVNCLYYFG, DVITIGGLSVLPQIMWSTFVP, LVPNSILPGTTAFGIAVAAII, FVGSLSGWTATLMFMWMPVSQ, SITMLLSMMGNGLMIPRALFI, LMWLTGSLWATLFYGYGNILC, and SQSFFVAATIGLISWIGLALW.

As to expression, expressed in leaves and roots. Expressed in root cap cells.

The protein localises to the plastid. The protein resides in the chloroplast inner membrane. Functionally, probable maltose transporter. Essential for the conversion of starch to sucrose in leaves at night, probably via the export of maltose from the chloroplast. Required for root cap cells formation. This chain is Maltose excess protein 1, chloroplastic (MEX1), found in Arabidopsis thaliana (Mouse-ear cress).